The chain runs to 169 residues: MSLVSPSPDSNAVMAGDQDASTSQVPSQSESKIGPNVATQTLRKPTMSKVILRTVADKGVHSRVSLAALKKAVSITGYNMAQNTWRFKRVLQNLVKKGMLKQVTGKGASGSFRLGKKQAFKSKCKAKRRQRRQKPGQRRTGSRRSLLGSKKSNNRLFKGVRRVAKGRRH.

Polar residues-rich tracts occupy residues 1 to 10 (MSLVSPSPDS) and 19 to 36 (DAST…IGPN). A disordered region spans residues 1 to 36 (MSLVSPSPDSNAVMAGDQDASTSQVPSQSESKIGPN). The 74-residue stretch at 43-116 (RKPTMSKVIL…GASGSFRLGK (74 aa)) folds into the H15 domain. 2 positions are modified to phosphoserine: serine 62 and serine 65. Residues 118–142 (QAFKSKCKAKRRQRRQKPGQRRTGS) are compositionally biased toward basic residues. Residues 118 to 154 (QAFKSKCKAKRRQRRQKPGQRRTGSRRSLLGSKKSNN) form a disordered region.

Belongs to the histone H1/H5 family.

The protein localises to the nucleus. It localises to the chromosome. Functionally, DNA-binding protein that may be implicated in chromatin remodeling and/or transcriptional regulation during spermiogenesis, the process of spermatid maturation into spermatozoa. This Rattus norvegicus (Rat) protein is Histone H1.9.